Here is a 278-residue protein sequence, read N- to C-terminus: HTH-type transcriptional activator RhaS (278 aa).

Residues 174–272 enclose the HTH araC/xylS-type domain; sequence NLLLAWLEDH…NWSPRDIRQG (99 aa). DNA-binding regions (H-T-H motif) lie at residues 191-212 and 239-262; these read DAVADQFSLSLRTLHRQLKQQT and VTDIAYRCGFSDSNHFSTLFRREF.

In terms of assembly, binds DNA as a dimer.

Its subcellular location is the cytoplasm. Activates expression of the rhaBAD and rhaT operons. The sequence is that of HTH-type transcriptional activator RhaS from Shigella boydii serotype 4 (strain Sb227).